Reading from the N-terminus, the 463-residue chain is Probable mannan endo-1,4-beta-mannosidase F (463 aa).

An N-terminal signal peptide occupies residues Met1 to Ala18. The region spanning Gln19–Val54 is the CBM1 domain. A disordered region spans residues Ala57–Ile78. The span at Ser59–Ser77 shows a compositional bias: low complexity. Residues Ser75–Ser118 form a ser-rich linker region. N-linked (GlcNAc...) asparagine glycosylation is present at Asn87. The span at Ser93–Ser118 shows a compositional bias: low complexity. Residues Ser93–Lys121 are disordered. Residues Phe119–Asn463 form a catalytic region. Trp171 and Asn285 together coordinate substrate. The active-site Proton donor is Glu286. Residue Tyr361 participates in substrate binding. Glu395 acts as the Nucleophile in catalysis. Trp424 provides a ligand contact to substrate.

The protein belongs to the glycosyl hydrolase 5 (cellulase A) family.

It is found in the secreted. The enzyme catalyses Random hydrolysis of (1-&gt;4)-beta-D-mannosidic linkages in mannans, galactomannans and glucomannans.. In terms of biological role, endo-1,4-mannanase, a crucial enzyme for depolymerization of seed galactomannans and wood galactoglucomannans. This chain is Probable mannan endo-1,4-beta-mannosidase F (manF), found in Aspergillus flavus (strain ATCC 200026 / FGSC A1120 / IAM 13836 / NRRL 3357 / JCM 12722 / SRRC 167).